Consider the following 116-residue polypeptide: uncharacterized protein (116 aa).

The helical transmembrane segment at 58 to 78 (IIVDFKFIFQIFLILSFGFFA) threads the bilayer.

The protein resides in the membrane. This is an uncharacterized protein from Rickettsia prowazekii (strain Madrid E).